Here is a 408-residue protein sequence, read N- to C-terminus: MDCAAALLPGFHPNYLLCPSRHFSSLLPKTDLSSPLKFQLQNKQLSLASSHGFSPVICNATLSDTYSETVELADIDWDNLGFGFLPTDYMYNMKCAQGESFSNGELQRFGNIELSPSAGVLNYGQGLFEGLKAYRKEDGNILLFRPEENALRMRLGAERMCMPSPTVDQFVDAVKATVLANKRWIPPVGKGSLYIRPLLMGSGAVLGLAPAPEYTFLIYVSPVGNYFKEGVAPIHLIVEDNLHRATPGGTGGVKTIGNYAAVLKAQSAAKEQGYSDVLYLDCVHKKYLEEVSSCNIFVVKGNLIFTPAIKGTILPGITRKSIIDVARTLGFQVEERLVHVDELLDADEVFCTGTAVVVSPVGSITYHGERVPYNEGGVGAVSQQLYSALTRLQMGFIKDNMNWTVELS.

The transit peptide at 1–58 directs the protein to the chloroplast; it reads MDCAAALLPGFHPNYLLCPSRHFSSLLPKTDLSSPLKFQLQNKQLSLASSHGFSPVIC. Arg152 lines the pyridoxal 5'-phosphate pocket. Lys254 serves as the catalytic Proton acceptor. N6-(pyridoxal phosphate)lysine is present on Lys254. Residue Glu290 participates in pyridoxal 5'-phosphate binding.

The protein belongs to the class-IV pyridoxal-phosphate-dependent aminotransferase family. It depends on pyridoxal 5'-phosphate as a cofactor. As to expression, expressed in lupulin glands and leaves.

It localises to the plastid. The protein resides in the chloroplast. The enzyme catalyses L-isoleucine + 2-oxoglutarate = (S)-3-methyl-2-oxopentanoate + L-glutamate. The catalysed reaction is L-leucine + 2-oxoglutarate = 4-methyl-2-oxopentanoate + L-glutamate. It carries out the reaction L-valine + 2-oxoglutarate = 3-methyl-2-oxobutanoate + L-glutamate. The protein operates within amino-acid biosynthesis; L-isoleucine biosynthesis; L-isoleucine from 2-oxobutanoate: step 4/4. It functions in the pathway amino-acid biosynthesis; L-leucine biosynthesis; L-leucine from 3-methyl-2-oxobutanoate: step 4/4. Its pathway is amino-acid biosynthesis; L-valine biosynthesis; L-valine from pyruvate: step 4/4. Converts 2-oxo acids to branched-chain amino acids. Shows no kinetic preferences corresponding to anabolic or catabolic functions, but likely involved in BCAA biosynthesis. This Humulus lupulus (European hop) protein is Branched-chain amino acid aminotransferase 2, chloroplastic.